A 494-amino-acid chain; its full sequence is Glutamate decarboxylase 5 (494 aa).

At K276 the chain carries N6-(pyridoxal phosphate)lysine.

The protein belongs to the group II decarboxylase family. In terms of assembly, homohexamer. Interacts with calmodulin. It depends on pyridoxal 5'-phosphate as a cofactor. In terms of tissue distribution, expressed in flowers.

It carries out the reaction L-glutamate + H(+) = 4-aminobutanoate + CO2. Catalyzes the production of GABA. The calmodulin-binding is calcium-dependent and it is proposed that this may, directly or indirectly, form a calcium regulated control of GABA biosynthesis. The sequence is that of Glutamate decarboxylase 5 (GAD5) from Arabidopsis thaliana (Mouse-ear cress).